We begin with the raw amino-acid sequence, 1367 residues long: MAPPRKRTRDLMPKFLNTESFDEFNQRLNNLPAESNVTSDEDAQFLESRKCQSKRWRKEEPLKLNLRSPWNVLCSPESISSAKFIVEKTCLIPVPSFEEAATNARRCLNTSSIPGSSGSASETNSGSDITKQDFKNDSPSDSKKVQGSSTSKSAKPKVIKVYSFVDLVTTTKKGNIQTEESSLNHEKKLGTVVDIVEPMKCDERSKEVQGSSTSKSAKPKVIKVYSFADVVTTTKKGNIQTEESSLNHEKKLGTVVDIIEPMKCDERSKEVQGSSTSKSAKLKVIKVYSFADVVTTTKKGNIQTEESSLNHEKKLGTVVDIVEPMKCDERSKEVQGSSTSKSEKPKVIKVYSFADVVTTTKKGNIQTEESSLNHEKKLGTVVDIVEPMKCDEGTKCEVTTTNKGKIHTEERSLNHEKKLGTVVDIVEPMKCDEGSKCEVTTTNKGNTQTEERSLNHEKKLGIGVDIVEPMKCDEGTKCEVTTTNKGKIQTEERSLNYEKKLGIGVDIVEPMKCDEENKCEVNADTFDVVIVEPMKCNKVTKCEVNVDTTGVNIVEPMKCNEVTKCEVNVDTIGVDIVEPMKCNEESKCEVNADTMSLQKRSKRAVSLVERFTEEEIKLHIMSLKKPSTQSAVEGMCDLKEEEESCQLCDDGTLLFPPQPLYCLLCSRRIDDRSFYYTPGEEELSNAQHQICSPCHSRCKTKFPLCGVFIDKHKMLKRSNFDNADTEEWVQCESCEKWQHQICGLYNKLKDEDKTAEYICPTCLLEECQSINNMALVDYTDSGAKDLPETVLSYFLEQRLFKRLKEERYQTAKATGKSINDVPEPEGLTLRVVFSADRTLTVNKQFASLLHKENFPSEFPYRSKVILLFQKVHGVDICIFALFVQEFGSECSQPNQRSTYIFYLDSVKYFKPERVTFAGEALRTFVYHEVLIGYLEYCKLRGFTTSYIWACPPKIGQDYIMYSHPKTQQTPDTKKLRKWYVSMLQKAAEQRVVMNVTNLYDRFFDSTEEYMTAARLPYFEGSFWSNRAEIMIQDIEREGNNELQKKVKLLSRRKVKTMSYKTTGDVDVDDVKNILLMEKLEKEVFPNKKDLMVVELNYSCTRCSKAVLSGLRWFCEKCKNLHLCESCYDAGQELPGEHIYKRMDKEKHQLSKVQVNGVLFSTTEDNDIIQENDMFESRQAFLAFSQKHNYNFHTLRHAKHSSMMILHHLHTSNKHHCSQNSSSLTCTACKKDVSTTIYFPCLLCPDYRACTGCYTKNRTLRHLHIFPTLPSANRAPSRTVMVLEILNAISHALLCQHKTTKSCSYPKCHEVKALFTHNVQCKIRKKGTRCNTCYKLWQTIRIHVYHCQDLNCPVPQCRDRKEVLIRKV.

Residues 110–151 form a disordered region; that stretch reads TSSIPGSSGSASETNSGSDITKQDFKNDSPSDSKKVQGSSTS. The segment covering 111 to 127 has biased composition (low complexity); that stretch reads SSIPGSSGSASETNSGS. Residues 130–144 show a composition bias toward basic and acidic residues; sequence TKQDFKNDSPSDSKK. 12 tandem repeats follow at residues 188 to 200, 223 to 235, 251 to 263, 286 to 298, 314 to 326, 349 to 361, 377 to 389, 418 to 430, 432 to 444, 459 to 471, 473 to 485, and 500 to 512. The tract at residues 188–512 is 12 X 13 AA approximate repeats; that stretch reads KLGTVVDIVE…IGVDIVEPMK (325 aa). A PHD-type zinc finger spans residues 688-765; it reads HQICSPCHSR…EYICPTCLLE (78 aa). The CBP/p300-type HAT domain occupies 780–1213; sequence DSGAKDLPET…ILHHLHTSNK (434 aa). Residues 903-905, 922-923, and W978 contribute to the acetyl-CoA site; these read LDS and RT. The ZZ-type 1; degenerate zinc-finger motif lies at 1094 to 1157; sequence ELNYSCTRCS…QLSKVQVNGV (64 aa). C1099, C1102, C1123, C1126, C1225, C1228, C1240, C1243, C1249, C1252, H1261, and H1263 together coordinate Zn(2+). Residues 1220 to 1273 form a ZZ-type 2 zinc finger; sequence SSSLTCTACKKDVSTTIYFPCLLCPDYRACTGCYTKNRTLRHLHIFPTLPSANR. The segment at 1274–1359 adopts a TAZ-type zinc-finger fold; that stretch reads APSRTVMVLE…NCPVPQCRDR (86 aa).

Rosette leaves, stems and flowers.

It localises to the nucleus. The enzyme catalyses L-lysyl-[protein] + acetyl-CoA = N(6)-acetyl-L-lysyl-[protein] + CoA + H(+). In terms of biological role, acetyltransferase enzyme. Acetylates histones, giving a specific tag for transcriptional activation. No acetyltransferase activity found in vitro. The sequence is that of Histone acetyltransferase HAC2 (HAC2) from Arabidopsis thaliana (Mouse-ear cress).